The primary structure comprises 387 residues: Phosphoglycerate kinase (387 aa).

Residues 21–23 (DLN), arginine 36, 59–62 (HLGR), arginine 113, and arginine 146 contribute to the substrate site. Residues lysine 197, glutamate 314, and 340–343 (GGDT) contribute to the ATP site.

It belongs to the phosphoglycerate kinase family. Monomer.

The protein resides in the cytoplasm. It catalyses the reaction (2R)-3-phosphoglycerate + ATP = (2R)-3-phospho-glyceroyl phosphate + ADP. It participates in carbohydrate degradation; glycolysis; pyruvate from D-glyceraldehyde 3-phosphate: step 2/5. This Alcanivorax borkumensis (strain ATCC 700651 / DSM 11573 / NCIMB 13689 / SK2) protein is Phosphoglycerate kinase.